We begin with the raw amino-acid sequence, 572 residues long: Urease subunit alpha (572 aa).

The Urease domain maps to 136-572 (GGIDTHIHFI…VPLGQRYFLF (437 aa)). Ni(2+) contacts are provided by histidine 141, histidine 143, and lysine 224. Residue lysine 224 is modified to N6-carboxylysine. Residue histidine 226 coordinates substrate. Residues histidine 253 and histidine 279 each contribute to the Ni(2+) site. Histidine 327 serves as the catalytic Proton donor. Aspartate 367 is a binding site for Ni(2+).

This sequence belongs to the metallo-dependent hydrolases superfamily. Urease alpha subunit family. In terms of assembly, heterotrimer of UreA (gamma), UreB (beta) and UreC (alpha) subunits. Three heterotrimers associate to form the active enzyme. Ni cation serves as cofactor. Carboxylation allows a single lysine to coordinate two nickel ions.

The protein localises to the cytoplasm. It carries out the reaction urea + 2 H2O + H(+) = hydrogencarbonate + 2 NH4(+). It functions in the pathway nitrogen metabolism; urea degradation; CO(2) and NH(3) from urea (urease route): step 1/1. This Haemophilus influenzae (strain 86-028NP) protein is Urease subunit alpha.